A 150-amino-acid polypeptide reads, in one-letter code: Urease accessory protein UreE (150 aa).

It belongs to the UreE family.

The protein localises to the cytoplasm. Its function is as follows. Involved in urease metallocenter assembly. Binds nickel. Probably functions as a nickel donor during metallocenter assembly. The chain is Urease accessory protein UreE from Parasynechococcus marenigrum (strain WH8102).